Reading from the N-terminus, the 617-residue chain is MDLKTAVFNAARDGKLRLLTKLLASKSKEEVSSLISEKTNGATPLLMAARYGHLDMVEFLLEQCSASIEVGGSVNFDGETIEGAPPLWAASAAGHLKVVQSLLNHGASVNNTTLTNSTPLRAACFDGHLEIVKYLVEHKADLEVSNRHGHTCLMISCYKGHKEIAQYLLEKGADVNRKSVKGNTALHDCAESGSLDIMKMLLMYCAKMEKDGYGMTPLLSASVTGHTNIVDFLTHHAQTSKTERINALELLGATFVDKKRDLLGALKYWKKAMNMRYSDRTNIISKPVPQTLIMAYDYAKEVNSAEELEGLIADPDEMRMQALLIRERILGPSHPDTSYYIRYRGAVYADSGNFKRCINLWKYALDMQQNNLDPLSPMTASSLLSFAELFSFMLQDRAKGLLGTTVTFDDLMGILCKSVLEIERAIKQTQCPADPLQLNKALSIILHLICLLEKVPCTLEQDHFKKQTIYRFLKLHPRGKNNFSPLHLAVDKNTTCVGRYPVCKFPSLQVTAILIECGADVNVRDSDDNSPLHIAALNNHPDIMNLLIKSGAHFDATNLHKQTASDLLDEKEIAKNLIQPINHTTLQCLAARVIVNHRIYYKGHIPEKLETFVSLHR.

N-acetylmethionine is present on methionine 1. ANK repeat units lie at residues 2–31, 40–70, 82–111, 115–144, 148–177, 181–210, and 213–242; these read DLKT…KEEV, NGAT…SIEV, EGAP…SVNN, TNST…DLEV, HGHT…DVNR, KGNT…KMEK, and YGMT…TSKT. 2 TPR repeats span residues 245–279 and 338–371; these read INAL…RYSD and SYYI…QQNN. 2 ANK repeats span residues 481 to 523 and 527 to 556; these read NNFS…DVNV and DDNS…HFDA.

Belongs to the fem-1 family. In terms of assembly, component of a CRL2 E3 ubiquitin-protein ligase complex, also named ECS (Elongin BC-CUL2/5-SOCS-box protein) complex, composed of CUL2, Elongin BC (ELOB and ELOC), RBX1 and substrate-specific adapter FEM1C.

The protein operates within protein modification; protein ubiquitination. Its function is as follows. Substrate-recognition component of a Cul2-RING (CRL2) E3 ubiquitin-protein ligase complex of the DesCEND (destruction via C-end degrons) pathway, which recognizes a C-degron located at the extreme C terminus of target proteins, leading to their ubiquitination and degradation. The C-degron recognized by the DesCEND pathway is usually a motif of less than ten residues and can be present in full-length proteins, truncated proteins or proteolytically cleaved forms. The CRL2(FEM1C) complex specifically recognizes proteins with an arginine at the C-terminus: recognizes and binds proteins ending with -Lys/Arg-Xaa-Arg and -Lys/Arg-Xaa-Xaa-Arg C-degrons, such as SIL1 or OR51B2, leading to their ubiquitination and degradation. The CRL2(FEM1C) complex mediates ubiquitination and degradation of truncated MSRB1/SEPX1 selenoproteins produced by failed UGA/Sec decoding. The protein is Protein fem-1 homolog C of Bos taurus (Bovine).